The sequence spans 119 residues: MKKLQNFNTFVSDNKNKNIFSALKDIHGVNLKKINKMGLVMGLDKFEKVSSMNFELFSLIKKQAIFFYNLEENKIFNNVNKKKKIKNYTGMRHILKLPVRGQRTHTNAKTPSKNIKKEL.

It belongs to the universal ribosomal protein uS13 family. Part of the small ribosomal subunit.

Its subcellular location is the mitochondrion. In terms of biological role, located at the top of the head of the small subunit, it contacts several helices of the small subunit rRNA. This is Small ribosomal subunit protein uS13m (RPS13) from Acanthamoeba castellanii (Amoeba).